A 156-amino-acid polypeptide reads, in one-letter code: Transmembrane protein 50 homolog (156 aa).

Helical transmembrane passes span 5–25, 45–65, 87–107, and 124–144; these read IMKYLPALAGIIFTAGWFLWI, IQWIYYLPGIFATLGMVMANI, VWLFISFAISFGCIGAALWIM, and PGIAITLQTSLIFLSSLLLVF.

Belongs to the UPF0220 family.

It is found in the membrane. The chain is Transmembrane protein 50 homolog (tmem50) from Dictyostelium discoideum (Social amoeba).